The sequence spans 90 residues: Small ribosomal subunit protein bS18B (90 aa).

This sequence belongs to the bacterial ribosomal protein bS18 family. Part of the 30S ribosomal subunit. Forms a tight heterodimer with protein bS6.

In terms of biological role, binds as a heterodimer with protein bS6 to the central domain of the 16S rRNA, where it helps stabilize the platform of the 30S subunit. The protein is Small ribosomal subunit protein bS18B of Roseiflexus sp. (strain RS-1).